The following is a 96-amino-acid chain: MQLKATSFRANEKIIFVLNSNKLFCETYDEFLNRLIDECEGAINYANNDITETLSIYSFKLSSETIGKLSTIAKKYRISRSEAFRKLIIAKAEGLC.

This is an uncharacterized protein from Sulfolobus islandicus filamentous virus (isolate Iceland/Hveragerdi) (SIFV).